Consider the following 476-residue polypeptide: S-adenosylmethionine-dependent nucleotide dehydratase (476 aa).

A cytidylate kinase-like domain region spans residues Met-1 to Ile-168. Gly-9–Thr-17 contributes to the ATP binding site. One can recognise a Radical SAM core domain in the interval Asn-176 to Glu-400. A prokaryotic viperin domain region spans residues Ser-183–Glu-476. [4Fe-4S] cluster is bound by residues Cys-192, Cys-196, and Cys-199.

In the N-terminal section; belongs to the cytidylate kinase-like family. This sequence in the C-terminal section; belongs to the radical SAM superfamily. Viperin family. [4Fe-4S] cluster is required as a cofactor.

It carries out the reaction GTP + AH2 + S-adenosyl-L-methionine = 3'-deoxy-3',4'-didehydro-GTP + 5'-deoxyadenosine + L-methionine + A + H2O + H(+). In terms of biological role, expression of pVip60 in E.coli (strain MG1655) confers resistance to phage T7; prevents culture collapse upon infection. Catalyzes the conversion of guanosine triphosphate (GTP) to 3'-deoxy-3',4'-didehydro-GTP (ddhGTP), probably via a SAM-dependent radical mechanism. The modified nucleotide represses transcription from T7 RNA polymerase-directed genes (possibly by acting as chain terminators), strongly suggesting these nucleotides block viral polymerase transcription. The N-terminus of the protein may generate NTP for use by the viperin domain. The sequence is that of S-adenosylmethionine-dependent nucleotide dehydratase from Lacinutrix mariniflava (strain JCM 13824 / KCCM 42306 / AKS432).